The primary structure comprises 143 residues: Small ribosomal subunit protein uS12 (143 aa).

Residues 1–20 (MGKPRGLRTARKLKNHRREQ) are compositionally biased toward basic residues. The interval 1–28 (MGKPRGLRTARKLKNHRREQRWHDKDYK) is disordered. Pro-62 is modified (hydroxyproline).

Belongs to the universal ribosomal protein uS12 family. As to quaternary structure, component of the 40S small ribosomal subunit.

It is found in the cytoplasm. Its subcellular location is the cytosol. It localises to the rough endoplasmic reticulum. This chain is Small ribosomal subunit protein uS12 (RPS23), found in Lumbricus rubellus (Humus earthworm).